The following is a 295-amino-acid chain: Methionine aminopeptidase (295 aa).

His-63 contacts substrate. A divalent metal cation is bound by residues Asp-83, Asp-94, and His-154. His-162 serves as a coordination point for substrate. Residues Glu-188 and Glu-281 each contribute to the a divalent metal cation site.

The protein belongs to the peptidase M24A family. Methionine aminopeptidase archaeal type 2 subfamily. In terms of assembly, monomer. Fe(2+) serves as cofactor. Co(2+) is required as a cofactor. It depends on Ni(2+) as a cofactor. The cofactor is Mn(2+).

It catalyses the reaction Release of N-terminal amino acids, preferentially methionine, from peptides and arylamides.. Removes the N-terminal methionine from nascent proteins. The N-terminal methionine is often cleaved when the second residue in the primary sequence is small and uncharged (Met-Ala-, Cys, Gly, Pro, Ser, Thr, or Val). The chain is Methionine aminopeptidase from Thermococcus onnurineus (strain NA1).